Here is a 186-residue protein sequence, read N- to C-terminus: MKTAHEIRPGNVIMLDGSPWVVQKTETTRSGRNAAIVKLKLKNVLLDSGTEQTFKGEDKLDDIILERLDCTYSYFADPMYVFMDEEYNQYDVEADNLGDAADYIIDGMEDVCQVTFYEGKAISVELPVHIVREVIYTEPSARGDTSGKVMKPATITGGGTVTVADFVKVGDKIEIDTRTGEFKKRV.

It belongs to the elongation factor P family.

Its subcellular location is the cytoplasm. It functions in the pathway protein biosynthesis; polypeptide chain elongation. In terms of biological role, involved in peptide bond synthesis. Stimulates efficient translation and peptide-bond synthesis on native or reconstituted 70S ribosomes in vitro. Probably functions indirectly by altering the affinity of the ribosome for aminoacyl-tRNA, thus increasing their reactivity as acceptors for peptidyl transferase. This is Elongation factor P from Shewanella frigidimarina (strain NCIMB 400).